The primary structure comprises 216 residues: Small ribosomal subunit protein uS3c (216 aa).

In terms of domain architecture, KH type-2 spans 43-118 (IKNYIQKNIR…KLNIAIVKIT (76 aa)).

This sequence belongs to the universal ribosomal protein uS3 family. As to quaternary structure, part of the 30S ribosomal subunit.

The protein localises to the plastid. Its subcellular location is the chloroplast. This Phaseolus vulgaris (Kidney bean) protein is Small ribosomal subunit protein uS3c (rps3).